The following is a 356-amino-acid chain: Serpentine receptor class epsilon-29 (356 aa).

Helical transmembrane passes span 29–49, 61–81, 119–139, 161–181, 190–210, 251–271, and 281–301; these read IVELFSYLICAYILTLNIYII, ILAIPLFGIWFELIIGKLITI, LLIFGGFLQWHYMFTIIFGVL, LFIPLFLTVISQFLSISTSLA, FLAQLPWIICCPFSAMAYFFV, LVFVVLSCIALCGIGITALFY, and FVENFLFLHPYLSCLTAIFSV.

This sequence belongs to the nematode receptor-like protein sre family.

Its subcellular location is the membrane. The chain is Serpentine receptor class epsilon-29 (sre-29) from Caenorhabditis elegans.